The primary structure comprises 472 residues: Probable glycine dehydrogenase (decarboxylating) subunit 2 (472 aa).

At Lys-268 the chain carries N6-(pyridoxal phosphate)lysine.

The protein belongs to the GcvP family. C-terminal subunit subfamily. In terms of assembly, the glycine cleavage system is composed of four proteins: P, T, L and H. In this organism, the P 'protein' is a heterodimer of two subunits. The cofactor is pyridoxal 5'-phosphate.

It catalyses the reaction N(6)-[(R)-lipoyl]-L-lysyl-[glycine-cleavage complex H protein] + glycine + H(+) = N(6)-[(R)-S(8)-aminomethyldihydrolipoyl]-L-lysyl-[glycine-cleavage complex H protein] + CO2. Its function is as follows. The glycine cleavage system catalyzes the degradation of glycine. The P protein binds the alpha-amino group of glycine through its pyridoxal phosphate cofactor; CO(2) is released and the remaining methylamine moiety is then transferred to the lipoamide cofactor of the H protein. In Thermoplasma volcanium (strain ATCC 51530 / DSM 4299 / JCM 9571 / NBRC 15438 / GSS1), this protein is Probable glycine dehydrogenase (decarboxylating) subunit 2.